Consider the following 233-residue polypeptide: Putative cobalt transport protein CbiM (233 aa).

The next 6 helical transmembrane spans lie at 9 to 29 (PPMW…YGIV), 43 to 63 (PLVA…MPSV), 75 to 95 (LGAV…VLLF), 107 to 127 (TLGA…VIVY), 138 to 158 (TVGI…TTAV), and 177 to 197 (IVIY…LTVI).

This sequence belongs to the CbiM family. In terms of assembly, forms an energy-coupling factor (ECF) transporter complex composed of an ATP-binding protein (A component, CbiO), a transmembrane protein (T component, CbiQ) and 2 possible substrate-capture proteins (S components, CbiM and CbiN) of unknown stoichimetry.

It localises to the cell membrane. It functions in the pathway cofactor biosynthesis; adenosylcobalamin biosynthesis. Part of the energy-coupling factor (ECF) transporter complex CbiMNOQ involved in cobalt import. The protein is Putative cobalt transport protein CbiM of Methanocaldococcus jannaschii (strain ATCC 43067 / DSM 2661 / JAL-1 / JCM 10045 / NBRC 100440) (Methanococcus jannaschii).